The sequence spans 513 residues: ATP synthase subunit alpha (513 aa).

An ATP-binding site is contributed by 169 to 176 (GDRKTGKS).

Belongs to the ATPase alpha/beta chains family. In terms of assembly, F-type ATPases have 2 components, CF(1) - the catalytic core - and CF(0) - the membrane proton channel. CF(1) has five subunits: alpha(3), beta(3), gamma(1), delta(1), epsilon(1). CF(0) has three main subunits: a(1), b(2) and c(9-12). The alpha and beta chains form an alternating ring which encloses part of the gamma chain. CF(1) is attached to CF(0) by a central stalk formed by the gamma and epsilon chains, while a peripheral stalk is formed by the delta and b chains.

The protein resides in the cell membrane. The enzyme catalyses ATP + H2O + 4 H(+)(in) = ADP + phosphate + 5 H(+)(out). In terms of biological role, produces ATP from ADP in the presence of a proton gradient across the membrane. The alpha chain is a regulatory subunit. This is ATP synthase subunit alpha from Levilactobacillus brevis (strain ATCC 367 / BCRC 12310 / CIP 105137 / JCM 1170 / LMG 11437 / NCIMB 947 / NCTC 947) (Lactobacillus brevis).